The sequence spans 308 residues: Glycine--tRNA ligase alpha subunit (308 aa).

The protein belongs to the class-II aminoacyl-tRNA synthetase family. In terms of assembly, tetramer of two alpha and two beta subunits.

The protein resides in the cytoplasm. It carries out the reaction tRNA(Gly) + glycine + ATP = glycyl-tRNA(Gly) + AMP + diphosphate. In Streptococcus pyogenes serotype M3 (strain SSI-1), this protein is Glycine--tRNA ligase alpha subunit.